A 458-amino-acid chain; its full sequence is D-inositol 3-phosphate glycosyltransferase (458 aa).

His-16 is a 1D-myo-inositol 3-phosphate binding site. UDP-N-acetyl-alpha-D-glucosamine is bound by residues 22-23 (QP) and Gly-30. 1D-myo-inositol 3-phosphate-binding positions include 27 to 32 (DAGGMN), Lys-85, Tyr-118, Thr-142, and Arg-162. Residues Arg-236, Lys-241, and Gln-302 each coordinate UDP-N-acetyl-alpha-D-glucosamine. Tyr-311, Arg-312, and Ser-314 together coordinate Mg(2+). Positions 324 and 332 each coordinate UDP-N-acetyl-alpha-D-glucosamine. Thr-338 contributes to the Mg(2+) binding site. Residues 428 to 458 (VAAQNVTGSSSRTRRPWRRRRSTLLPMTGRS) form a disordered region. Basic residues predominate over residues 439–449 (RTRRPWRRRRS).

Belongs to the glycosyltransferase group 1 family. MshA subfamily. In terms of assembly, homodimer.

The catalysed reaction is 1D-myo-inositol 3-phosphate + UDP-N-acetyl-alpha-D-glucosamine = 1D-myo-inositol 2-acetamido-2-deoxy-alpha-D-glucopyranoside 3-phosphate + UDP + H(+). In terms of biological role, catalyzes the transfer of a N-acetyl-glucosamine moiety to 1D-myo-inositol 3-phosphate to produce 1D-myo-inositol 2-acetamido-2-deoxy-glucopyranoside 3-phosphate in the mycothiol biosynthesis pathway. This Gordonia bronchialis (strain ATCC 25592 / DSM 43247 / BCRC 13721 / JCM 3198 / KCTC 3076 / NBRC 16047 / NCTC 10667) (Rhodococcus bronchialis) protein is D-inositol 3-phosphate glycosyltransferase.